The primary structure comprises 168 residues: Leukotoxin-activating lysine-acyltransferase LtxC (168 aa).

Residues histidine 23 and aspartate 92 contribute to the active site.

Belongs to the RTX toxin acyltransferase family.

It is found in the cytoplasm. The enzyme catalyses a fatty acyl-[ACP] + L-lysyl-[protein] = N(6)-(fatty acyl)-L-lysyl-[protein] + holo-[ACP] + H(+). Required for full activity and modification of the LtxA leukotoxin. Involved in fatty acid modification of the protoxin at two internal lysine residues, thereby converting it to the active toxin. This chain is Leukotoxin-activating lysine-acyltransferase LtxC, found in Aggregatibacter actinomycetemcomitans (Actinobacillus actinomycetemcomitans).